Consider the following 202-residue polypeptide: Ribonuclease HII (202 aa).

The region spanning Leu-12 to Glu-201 is the RNase H type-2 domain. Residues Asp-18, Glu-19, and Asp-110 each contribute to the a divalent metal cation site.

It belongs to the RNase HII family. Mn(2+) is required as a cofactor. It depends on Mg(2+) as a cofactor.

The protein resides in the cytoplasm. It carries out the reaction Endonucleolytic cleavage to 5'-phosphomonoester.. Endonuclease that specifically degrades the RNA of RNA-DNA hybrids. This chain is Ribonuclease HII, found in Coxiella burnetii (strain CbuG_Q212) (Coxiella burnetii (strain Q212)).